Consider the following 517-residue polypeptide: Bifunctional purine biosynthesis protein PurH (517 aa).

In terms of domain architecture, MGS-like spans 1–145 (MSPLALVSVS…KNHKYVSVLV (145 aa)).

It belongs to the PurH family.

The catalysed reaction is (6R)-10-formyltetrahydrofolate + 5-amino-1-(5-phospho-beta-D-ribosyl)imidazole-4-carboxamide = 5-formamido-1-(5-phospho-D-ribosyl)imidazole-4-carboxamide + (6S)-5,6,7,8-tetrahydrofolate. The enzyme catalyses IMP + H2O = 5-formamido-1-(5-phospho-D-ribosyl)imidazole-4-carboxamide. Its pathway is purine metabolism; IMP biosynthesis via de novo pathway; 5-formamido-1-(5-phospho-D-ribosyl)imidazole-4-carboxamide from 5-amino-1-(5-phospho-D-ribosyl)imidazole-4-carboxamide (10-formyl THF route): step 1/1. It functions in the pathway purine metabolism; IMP biosynthesis via de novo pathway; IMP from 5-formamido-1-(5-phospho-D-ribosyl)imidazole-4-carboxamide: step 1/1. This Prochlorococcus marinus (strain MIT 9215) protein is Bifunctional purine biosynthesis protein PurH.